The following is a 100-amino-acid chain: Large ribosomal subunit protein bL27 (100 aa).

A propeptide spanning residues 1–13 (MNKLYWLTDLQLF) is cleaved from the precursor. Positions 17 to 39 (KGVGSSKNGRDSNPKYLGAKLGD) are disordered.

Belongs to the bacterial ribosomal protein bL27 family. The N-terminus is cleaved by ribosomal processing cysteine protease Prp.

In Ureaplasma parvum serovar 3 (strain ATCC 700970), this protein is Large ribosomal subunit protein bL27.